The chain runs to 60 residues: Rubredoxin 4 (60 aa).

A Rubredoxin-like domain is found at 4–55 (YKLYQCAQCGFEYDEAVGWPEDGIEPGTRWDDIPEDWSCPDCGAAKSDFFMV). Residues cysteine 9, cysteine 12, cysteine 42, and cysteine 45 each coordinate Fe cation.

The protein belongs to the rubredoxin family. Fe(3+) serves as cofactor.

Its function is as follows. Involved in the hydrocarbon hydroxylating system, which transfers electrons from NADH to rubredoxin reductase and then through rubredoxin to alkane 1 monooxygenase. The sequence is that of Rubredoxin 4 (rubA4) from Rhodococcus sp. (strain Q15).